The chain runs to 229 residues: 7-cyano-7-deazaguanine synthase (229 aa).

12–22 is a binding site for ATP; sequence LSGGMDSCVCA. 4 residues coordinate Zn(2+): cysteine 194, cysteine 202, cysteine 205, and cysteine 208.

The protein belongs to the QueC family. The cofactor is Zn(2+).

The catalysed reaction is 7-carboxy-7-deazaguanine + NH4(+) + ATP = 7-cyano-7-deazaguanine + ADP + phosphate + H2O + H(+). It functions in the pathway purine metabolism; 7-cyano-7-deazaguanine biosynthesis. Catalyzes the ATP-dependent conversion of 7-carboxy-7-deazaguanine (CDG) to 7-cyano-7-deazaguanine (preQ(0)). This chain is 7-cyano-7-deazaguanine synthase, found in Acidobacterium capsulatum (strain ATCC 51196 / DSM 11244 / BCRC 80197 / JCM 7670 / NBRC 15755 / NCIMB 13165 / 161).